A 282-amino-acid chain; its full sequence is Putative phosphoenolpyruvate synthase regulatory protein (282 aa).

Position 162–169 (162–169) interacts with ADP; that stretch reads GVSRSGKT.

This sequence belongs to the pyruvate, phosphate/water dikinase regulatory protein family. PSRP subfamily.

It catalyses the reaction [pyruvate, water dikinase] + ADP = [pyruvate, water dikinase]-phosphate + AMP + H(+). The enzyme catalyses [pyruvate, water dikinase]-phosphate + phosphate + H(+) = [pyruvate, water dikinase] + diphosphate. Bifunctional serine/threonine kinase and phosphorylase involved in the regulation of the phosphoenolpyruvate synthase (PEPS) by catalyzing its phosphorylation/dephosphorylation. This chain is Putative phosphoenolpyruvate synthase regulatory protein, found in Psychrobacter arcticus (strain DSM 17307 / VKM B-2377 / 273-4).